The chain runs to 491 residues: AAA-ATPase At2g46620 (491 aa).

Residues 1–21 (MGILWDSFLLLLVSTFALFLV) traverse the membrane as a helical segment. ATP is bound at residue 238–245 (GPSGTGKS). The interval 423-460 (GTGRRLLLENGSRKSTSEDVSDDMSGSLCGGGGGSSPA) is disordered.

This sequence belongs to the AAA ATPase family. BCS1 subfamily. Mg(2+) serves as cofactor.

It localises to the membrane. It catalyses the reaction ATP + H2O = ADP + phosphate + H(+). The sequence is that of AAA-ATPase At2g46620 from Arabidopsis thaliana (Mouse-ear cress).